A 266-amino-acid chain; its full sequence is Ribosomal RNA small subunit methyltransferase A (266 aa).

6 residues coordinate S-adenosyl-L-methionine: H13, L15, G40, E61, D85, and N104.

The protein belongs to the class I-like SAM-binding methyltransferase superfamily. rRNA adenine N(6)-methyltransferase family. RsmA subfamily.

The protein resides in the cytoplasm. It catalyses the reaction adenosine(1518)/adenosine(1519) in 16S rRNA + 4 S-adenosyl-L-methionine = N(6)-dimethyladenosine(1518)/N(6)-dimethyladenosine(1519) in 16S rRNA + 4 S-adenosyl-L-homocysteine + 4 H(+). Its function is as follows. Specifically dimethylates two adjacent adenosines (A1518 and A1519) in the loop of a conserved hairpin near the 3'-end of 16S rRNA in the 30S particle. May play a critical role in biogenesis of 30S subunits. The sequence is that of Ribosomal RNA small subunit methyltransferase A from Parabacteroides distasonis (strain ATCC 8503 / DSM 20701 / CIP 104284 / JCM 5825 / NCTC 11152).